A 224-amino-acid chain; its full sequence is N6-methyladenosine RNA demethylase ALKBH (224 aa).

The Fe2OG dioxygenase domain occupies 93 to 222 (LAQAAIVNFY…RINLNVRQMR (130 aa)). Fe cation-binding residues include His111, Asp113, and His178. Arg213 provides a ligand contact to 2-oxoglutarate.

This sequence belongs to the alkB family. The cofactor is Fe(2+).

It catalyses the reaction an N(6)-methyladenosine in mRNA + 2-oxoglutarate + O2 = an adenosine in mRNA + formaldehyde + succinate + CO2. Functionally, RNA demethylase that regulates the stability of mRNAs through an m(6)A-dependent manner. M6A is a modification present at internal sites of mRNAs and some non-coding RNAs and plays a role in mRNA stability and processing. Demethylate m6A at position A1935 within the 3'UTR of transcription factor ZAP1 and plays an important role in C.parasitica development and virulence. Target mRNAs are primarily associated with amino-acid biosynthesis, 2-oxocarboxylic acid metabolism, and ABC transporters, as well as alpha-amino acid metabolism, small-molecule biosynthesis, and the sulfite reductase complex (NADPH). The sequence is that of N6-methyladenosine RNA demethylase ALKBH from Cryphonectria parasitica (strain ATCC 38755 / EP155).